The following is a 428-amino-acid chain: Kynureninase (428 aa).

Pyridoxal 5'-phosphate contacts are provided by residues Thr104, Thr105, 132-135 (FPSD), Asp213, His216, and Tyr238. Lys239 bears the N6-(pyridoxal phosphate)lysine mark. Residues Trp267 and Thr295 each contribute to the pyridoxal 5'-phosphate site.

It belongs to the kynureninase family. As to quaternary structure, homodimer. Pyridoxal 5'-phosphate is required as a cofactor.

The catalysed reaction is L-kynurenine + H2O = anthranilate + L-alanine + H(+). The enzyme catalyses 3-hydroxy-L-kynurenine + H2O = 3-hydroxyanthranilate + L-alanine + H(+). It participates in amino-acid degradation; L-kynurenine degradation; L-alanine and anthranilate from L-kynurenine: step 1/1. The protein operates within cofactor biosynthesis; NAD(+) biosynthesis; quinolinate from L-kynurenine: step 2/3. Catalyzes the cleavage of L-kynurenine (L-Kyn) and L-3-hydroxykynurenine (L-3OHKyn) into anthranilic acid (AA) and 3-hydroxyanthranilic acid (3-OHAA), respectively. This is Kynureninase from Bacillus cereus (strain ZK / E33L).